The following is a 149-amino-acid chain: Large ribosomal subunit protein uL15 (149 aa).

2 stretches are compositionally biased toward basic residues: residues 1–14 (MPTRFSKTRKHRGH) and 21–30 (RVGKHRKHPG). The interval 1–43 (MPTRFSKTRKHRGHVSAGKGRVGKHRKHPGGRGMAGGQHHHRT) is disordered.

It belongs to the universal ribosomal protein uL15 family. As to quaternary structure, component of the large ribosomal subunit (LSU). Mature N.crassa ribosomes consist of a small (40S) and a large (60S) subunit. The 40S small subunit contains 1 molecule of ribosomal RNA (18S rRNA) and at least 32 different proteins. The large 60S subunit contains 3 rRNA molecules (26S, 5.8S and 5S rRNA) and at least 42 different proteins.

Its subcellular location is the cytoplasm. Its function is as follows. Component of the ribosome, a large ribonucleoprotein complex responsible for the synthesis of proteins in the cell. The small ribosomal subunit (SSU) binds messenger RNAs (mRNAs) and translates the encoded message by selecting cognate aminoacyl-transfer RNA (tRNA) molecules. The large subunit (LSU) contains the ribosomal catalytic site termed the peptidyl transferase center (PTC), which catalyzes the formation of peptide bonds, thereby polymerizing the amino acids delivered by tRNAs into a polypeptide chain. The nascent polypeptides leave the ribosome through a tunnel in the LSU and interact with protein factors that function in enzymatic processing, targeting, and the membrane insertion of nascent chains at the exit of the ribosomal tunnel. This Neurospora crassa (strain ATCC 24698 / 74-OR23-1A / CBS 708.71 / DSM 1257 / FGSC 987) protein is Large ribosomal subunit protein uL15 (rpl-28).